A 155-amino-acid chain; its full sequence is Cytochrome P450 (155 aa).

Cys-99 is a binding site for heme.

Belongs to the cytochrome P450 family. Requires heme as cofactor.

The polypeptide is Cytochrome P450 (Helianthus annuus (Common sunflower)).